Consider the following 872-residue polypeptide: Paladin (872 aa).

Positions 1–37 (MGTTASAAQQVPSTVPSSENVQGNGSGSSNVEDRNSL) are disordered. G2 is lipidated: N-myristoyl glycine. Residues 186–210 (RRKENLHENLHDLEKGLRAENLELA) are a coiled coil.

This sequence belongs to the paladin family.

The protein resides in the cytoplasm. It is found in the cytosol. This is Paladin (pald1) from Xenopus tropicalis (Western clawed frog).